The sequence spans 250 residues: GTP cyclohydrolase 1 (250 aa).

2 stretches are compositionally biased toward basic and acidic residues: residues 1-14 (MEKGPVRAPAEKPR) and 35-44 (PAEKPPRPEA). Positions 1–64 (MEKGPVRAPA…GERPRSEEDN (64 aa)) are disordered. Residues Ser60 and Ser81 each carry the phosphoserine modification. Zn(2+)-binding residues include Cys141, His144, and Cys212.

This sequence belongs to the GTP cyclohydrolase I family. In terms of assembly, toroid-shaped homodecamer, composed of a dimer of pentamers. The inactive isoforms also form decamers and may possibly be incorporated into GCH1 heterodecamers, decreasing enzyme stability and activity. Interacts with AHSA1 and GCHFR/GFRP. Post-translationally, phosphorylated by casein kinase II at Ser-81 in HAECs during oscillatory shear stress; phosphorylation at Ser-81 results in increased enzyme activity. As to expression, in epidermis, expressed predominantly in basal undifferentiated keratinocytes and in some but not all melanocytes (at protein level).

It localises to the cytoplasm. The protein localises to the nucleus. It catalyses the reaction GTP + H2O = 7,8-dihydroneopterin 3'-triphosphate + formate + H(+). It participates in cofactor biosynthesis; 7,8-dihydroneopterin triphosphate biosynthesis; 7,8-dihydroneopterin triphosphate from GTP: step 1/1. Its activity is regulated as follows. GTP shows a positive allosteric effect, and tetrahydrobiopterin inhibits the enzyme activity. Zinc is required for catalytic activity. Inhibited by Mg(2+). In terms of biological role, positively regulates nitric oxide synthesis in umbilical vein endothelial cells (HUVECs). May be involved in dopamine synthesis. May modify pain sensitivity and persistence. Isoform GCH-1 is the functional enzyme, the potential function of the enzymatically inactive isoforms remains unknown. This is GTP cyclohydrolase 1 (GCH1) from Homo sapiens (Human).